A 334-amino-acid chain; its full sequence is MSEFKGIPVSSGSVVERDGVRTIKDGVKRRDDGQGAVRRRKPQWLKARAPGGEGYRSVRGIVHDHHLSTVCEESHCPNLGECWSHGTATFMVLGSVCTRTCRFCSVDTGNPKGRLDPQEPEHCAESVRLMGLRYVVLTSVDRDDLPDGGAEHYAQCVRAIKADNPDTAVEALTPDFRGDEEAVRTVVDSGLEVFAHNVEVVRRLSPQVRDPRAGYEQSLAVLQVAKRLRPGVLTKSSLMVGLGETDAEIDEAFDDLLRAEVDIVTLGQYLQPTRNHLPVERFVSPDEFEALRQEGLRRGFREVVAGPLVRSSYRADRVLEGNNVGLPSVGPDVG.

Positions 71, 76, 82, 97, 101, 104, and 312 each coordinate [4Fe-4S] cluster. Positions 83 to 301 (WSHGTATFMV…RQEGLRRGFR (219 aa)) constitute a Radical SAM core domain.

Belongs to the radical SAM superfamily. Lipoyl synthase family. Requires [4Fe-4S] cluster as cofactor.

Its subcellular location is the cytoplasm. It catalyses the reaction [[Fe-S] cluster scaffold protein carrying a second [4Fe-4S](2+) cluster] + N(6)-octanoyl-L-lysyl-[protein] + 2 oxidized [2Fe-2S]-[ferredoxin] + 2 S-adenosyl-L-methionine + 4 H(+) = [[Fe-S] cluster scaffold protein] + N(6)-[(R)-dihydrolipoyl]-L-lysyl-[protein] + 4 Fe(3+) + 2 hydrogen sulfide + 2 5'-deoxyadenosine + 2 L-methionine + 2 reduced [2Fe-2S]-[ferredoxin]. It functions in the pathway protein modification; protein lipoylation via endogenous pathway; protein N(6)-(lipoyl)lysine from octanoyl-[acyl-carrier-protein]: step 2/2. In terms of biological role, catalyzes the radical-mediated insertion of two sulfur atoms into the C-6 and C-8 positions of the octanoyl moiety bound to the lipoyl domains of lipoate-dependent enzymes, thereby converting the octanoylated domains into lipoylated derivatives. The chain is Lipoyl synthase from Halorhodospira halophila (strain DSM 244 / SL1) (Ectothiorhodospira halophila (strain DSM 244 / SL1)).